The sequence spans 61 residues: Large ribosomal subunit protein bL32 (61 aa).

A compositionally biased stretch (basic residues) spans 1–19 (MAHPKRRQSKTRTAKRRTH). The segment at 1 to 20 (MAHPKRRQSKTRTAKRRTHD) is disordered.

The protein belongs to the bacterial ribosomal protein bL32 family.

This chain is Large ribosomal subunit protein bL32, found in Porphyromonas gingivalis (strain ATCC 33277 / DSM 20709 / CIP 103683 / JCM 12257 / NCTC 11834 / 2561).